The chain runs to 178 residues: Probable chorismate pyruvate-lyase (178 aa).

Substrate contacts are provided by arginine 72, leucine 110, and glutamate 169.

Belongs to the UbiC family.

It localises to the cytoplasm. It catalyses the reaction chorismate = 4-hydroxybenzoate + pyruvate. It functions in the pathway cofactor biosynthesis; ubiquinone biosynthesis. In terms of biological role, removes the pyruvyl group from chorismate, with concomitant aromatization of the ring, to provide 4-hydroxybenzoate (4HB) for the ubiquinone pathway. The protein is Probable chorismate pyruvate-lyase of Nitrosomonas eutropha (strain DSM 101675 / C91 / Nm57).